The primary structure comprises 222 residues: Transmembrane reductase CYB561D2 (222 aa).

Topologically, residues 2–17 (ALSVETESHIYRALRT) are cytoplasmic. One can recognise a Cytochrome b561 domain in the interval 14–217 (ALRTVSGAAA…NQVSNAYLYR (204 aa)). The helical transmembrane segment at 18 to 38 (VSGAAAHLVALGFTIFVAVLA) threads the bilayer. Residues 39 to 46 (RPGSSLFS) are Lumenal-facing. Residues 47 to 67 (WHPVLMSLAFSFLMTEALLVF) traverse the membrane as a helical segment. His-48 lines the heme b pocket. The Cytoplasmic portion of the chain corresponds to 68-85 (SPESSLLRSLSRKGRARC). Residues His-86 and His-120 each contribute to the heme b site. Residues 86 to 106 (HWVLQLLALLCALLGLGLVIL) traverse the membrane as a helical segment. The Lumenal portion of the chain corresponds to 107-122 (HKEQLGKAHLATWHGR). Residues 123–143 (AGLLAVLWAGLQCSGGVGLLY) traverse the membrane as a helical segment. Residues 144–162 (PKLLPRWPLAKLKLYHATS) are Cytoplasmic-facing. His-159 is a binding site for heme b. The chain crosses the membrane as a helical span at residues 163-183 (GLVGYLLGGASLLLGMCSLWF). Residues 184–186 (TAT) lie on the Lumenal side of the membrane. The helical transmembrane segment at 187 to 207 (VTGGVWYLAVLCPVITSLVIM) threads the bilayer. Residues 208 to 222 (NQVSNAYLYRKRIQP) lie on the Cytoplasmic side of the membrane.

Heme b serves as cofactor.

The protein localises to the endoplasmic reticulum membrane. The protein resides in the cytoplasmic vesicle membrane. It catalyses the reaction monodehydro-L-ascorbate radical(out) + L-ascorbate(in) = monodehydro-L-ascorbate radical(in) + L-ascorbate(out). The catalysed reaction is Fe(3+)(out) + L-ascorbate(in) = monodehydro-L-ascorbate radical(in) + Fe(2+)(out) + H(+). In terms of biological role, transmembrane reductase that may use ascorbate as an electron donor in the cytoplasm and transfer electrons across endoplasmic reticulum membranes to reduce monodehydro-L-ascorbate radical and iron cations Fe(3+) in the lumen of that compartment. The chain is Transmembrane reductase CYB561D2 from Bos taurus (Bovine).